A 215-amino-acid polypeptide reads, in one-letter code: Pyrrolidone-carboxylate peptidase (215 aa).

Catalysis depends on residues glutamate 78, cysteine 141, and histidine 165.

This sequence belongs to the peptidase C15 family. In terms of assembly, homotetramer.

The protein resides in the cytoplasm. The catalysed reaction is Release of an N-terminal pyroglutamyl group from a polypeptide, the second amino acid generally not being Pro.. Functionally, removes 5-oxoproline from various penultimate amino acid residues except L-proline. This Lacticaseibacillus paracasei (strain ATCC 334 / BCRC 17002 / CCUG 31169 / CIP 107868 / KCTC 3260 / NRRL B-441) (Lactobacillus paracasei) protein is Pyrrolidone-carboxylate peptidase.